The following is a 592-amino-acid chain: Methionine--tRNA ligase (592 aa).

The 'HIGH' region motif lies at 12–22 (PYANGPFHVGH). Zn(2+)-binding residues include cysteine 144, cysteine 147, cysteine 157, and cysteine 160. The 'KMSKS' region motif lies at 342 to 346 (KMSTS). Residue threonine 345 participates in ATP binding.

The protein belongs to the class-I aminoacyl-tRNA synthetase family. MetG type 1 subfamily. In terms of assembly, monomer. It depends on Zn(2+) as a cofactor.

Its subcellular location is the cytoplasm. It carries out the reaction tRNA(Met) + L-methionine + ATP = L-methionyl-tRNA(Met) + AMP + diphosphate. Functionally, is required not only for elongation of protein synthesis but also for the initiation of all mRNA translation through initiator tRNA(fMet) aminoacylation. The sequence is that of Methionine--tRNA ligase from Roseiflexus sp. (strain RS-1).